A 99-amino-acid chain; its full sequence is Aspartyl/glutamyl-tRNA(Asn/Gln) amidotransferase subunit C (99 aa).

It belongs to the GatC family. Heterotrimer of A, B and C subunits.

The catalysed reaction is L-glutamyl-tRNA(Gln) + L-glutamine + ATP + H2O = L-glutaminyl-tRNA(Gln) + L-glutamate + ADP + phosphate + H(+). The enzyme catalyses L-aspartyl-tRNA(Asn) + L-glutamine + ATP + H2O = L-asparaginyl-tRNA(Asn) + L-glutamate + ADP + phosphate + 2 H(+). Allows the formation of correctly charged Asn-tRNA(Asn) or Gln-tRNA(Gln) through the transamidation of misacylated Asp-tRNA(Asn) or Glu-tRNA(Gln) in organisms which lack either or both of asparaginyl-tRNA or glutaminyl-tRNA synthetases. The reaction takes place in the presence of glutamine and ATP through an activated phospho-Asp-tRNA(Asn) or phospho-Glu-tRNA(Gln). The chain is Aspartyl/glutamyl-tRNA(Asn/Gln) amidotransferase subunit C from Solibacter usitatus (strain Ellin6076).